The chain runs to 374 residues: Cysteine-type anaerobic sulfatase-maturating enzyme (374 aa).

Positions 1-227 (MKSLSMLIKP…LNKLFDLWFK (227 aa)) constitute a Radical SAM core domain. 2 residues coordinate [4Fe-4S] cluster: Cys15 and Cys19. Tyr21 serves as a coordination point for S-adenosyl-L-methionine. Cys22 contributes to the [4Fe-4S] cluster binding site. S-adenosyl-L-methionine-binding residues include Gly66, Ser122, Arg134, and Leu195. [4Fe-4S] cluster is bound by residues Cys255, Cys261, and Cys276. Asp277 functions as the Proton acceptor in the catalytic mechanism. The [4Fe-4S] cluster site is built by Cys317, Cys320, Cys326, Cys330, and Cys348.

The protein belongs to the radical SAM superfamily. Anaerobic sulfatase-maturating enzyme family. It depends on [4Fe-4S] cluster as a cofactor.

The enzyme catalyses L-cysteinyl-[sulfatase] + S-adenosyl-L-methionine + H2O = 3-oxo-L-alanyl-[sulfatase] + hydrogen sulfide + 5'-deoxyadenosine + L-methionine + 2 H(+). It functions in the pathway protein modification; sulfatase oxidation. Its function is as follows. Involved in 'Cys-type' sulfatase maturation under anaerobic conditions. Catalyzes the post-translational modification of cysteine into 3-oxoalanine (also known as C(alpha)-formylglycine (FGly)), by a free radical chemical mechanism initiated via the reductive cleavage of S-adenosyl-L-methionine (SAM). This chain is Cysteine-type anaerobic sulfatase-maturating enzyme, found in Clostridium novyi (strain NT).